The sequence spans 431 residues: MRYQRPKGTADILPGDSQTWQFVEATARQLFANYRFEEIRTPMFENFEVFSRTSGDTSDIVTKEMYDFKDKGDRHLSLRPEGTAGVVRAFVENKLYGPETQKPYKVYYMGPMFRYERPQSGRQRQFHQIGVEAFGSDAPELDVEVIALGMNLLGKLGLTHLRLAVNTLGDQETRTAYRQALIDFLEPHFDELSEDSKVRLHKNPLRVLDSKDKHDQELVADAPSILDFLTPTATAHFDRVKASLDALGIDYDVDATMVRGLDYYNHTIFEIMADSPALGEGYTTVLAGGRYNGLVEELGGPEMPGVGFGLGVERLVLLMQAEQVAIPDNHPLDVYVVGIGDQTSLATLKIVQAIRQSGLTADRDYLDRKPKAQFKTANRLNAAYTLTIGEQELADHTANLKSMATGEEISVPLADIYQDFQNVVATKFTAK.

Belongs to the class-II aminoacyl-tRNA synthetase family. As to quaternary structure, homodimer.

The protein localises to the cytoplasm. The enzyme catalyses tRNA(His) + L-histidine + ATP = L-histidyl-tRNA(His) + AMP + diphosphate + H(+). The sequence is that of Histidine--tRNA ligase from Levilactobacillus brevis (strain ATCC 367 / BCRC 12310 / CIP 105137 / JCM 1170 / LMG 11437 / NCIMB 947 / NCTC 947) (Lactobacillus brevis).